A 120-amino-acid polypeptide reads, in one-letter code: Putative iron-sulfur cluster insertion protein ErpA (120 aa).

Residues Cys49, Cys113, and Cys115 each contribute to the iron-sulfur cluster site.

Belongs to the HesB/IscA family. As to quaternary structure, homodimer. Requires iron-sulfur cluster as cofactor.

Its function is as follows. Required for insertion of 4Fe-4S clusters. The chain is Putative iron-sulfur cluster insertion protein ErpA from Albidiferax ferrireducens (strain ATCC BAA-621 / DSM 15236 / T118) (Rhodoferax ferrireducens).